Consider the following 321-residue polypeptide: Cytochrome f (321 aa).

The first 38 residues, 1–38 (MKKNFYTISKTMSRSLKLILFSVFIGFSIFLIPQPTWA), serve as a signal peptide directing secretion. Heme-binding residues include Y39, C59, C62, and H63. The helical transmembrane segment at 288–308 (VIGMIIFFIGVGLSQIMLVLK) threads the bilayer.

The protein belongs to the cytochrome f family. As to quaternary structure, the 4 large subunits of the cytochrome b6-f complex are cytochrome b6, subunit IV (17 kDa polypeptide, PetD), cytochrome f and the Rieske protein, while the 4 small subunits are PetG, PetL, PetM and PetN. The complex functions as a dimer. Heme is required as a cofactor.

It is found in the cellular thylakoid membrane. Its function is as follows. Component of the cytochrome b6-f complex, which mediates electron transfer between photosystem II (PSII) and photosystem I (PSI), cyclic electron flow around PSI, and state transitions. The chain is Cytochrome f from Prochlorococcus marinus (strain NATL1A).